The chain runs to 631 residues: 1-deoxy-D-xylulose-5-phosphate synthase (631 aa).

Residues H73 and 114–116 (GHS) contribute to the thiamine diphosphate site. Residue D145 coordinates Mg(2+). Thiamine diphosphate-binding positions include 146–147 (GA), N174, Y285, and E366. N174 contacts Mg(2+).

This sequence belongs to the transketolase family. DXPS subfamily. In terms of assembly, homodimer. It depends on Mg(2+) as a cofactor. Requires thiamine diphosphate as cofactor.

The enzyme catalyses D-glyceraldehyde 3-phosphate + pyruvate + H(+) = 1-deoxy-D-xylulose 5-phosphate + CO2. It participates in metabolic intermediate biosynthesis; 1-deoxy-D-xylulose 5-phosphate biosynthesis; 1-deoxy-D-xylulose 5-phosphate from D-glyceraldehyde 3-phosphate and pyruvate: step 1/1. In terms of biological role, catalyzes the acyloin condensation reaction between C atoms 2 and 3 of pyruvate and glyceraldehyde 3-phosphate to yield 1-deoxy-D-xylulose-5-phosphate (DXP). The chain is 1-deoxy-D-xylulose-5-phosphate synthase from Desulfitobacterium hafniense (strain DSM 10664 / DCB-2).